The chain runs to 2167 residues: MRAIRLTVACRYLGPFRSVTLSPVVLPVRLFQTQEITPGEVSLVEATDESDRAFGETRKEDFSFDGSSEFPECFKDTKHVDTFSRARVVSFIKRFSQGAVTSSSEVFEGREIVNDNGTPLYHSRVRLPFRSHTGELWAHGVACNSKDAELLAAMHAEHIIDEFGYHIYTLPSMQRKHAEAARKAGRWAPLPDELERTQSPVRVPLPLRRIVDRDETEGGKWLLIDMRPNHYISPSHTLLSPCLFDTTAVHRIKSFLDEHKLSFAQLCTSVEEPGEGGGQSWYVATVSLPPELSTFSEIKAQGKALNREAAVTLACMHAELVLDAHSICLYPSDSTKQKQHALAAWSYGRPAPLPGEDQKNPSHVVCPLPLKQLAVRREDRISCISYEEDIIRRHRALTDQTCEFIETPTLDSSAVEQLKQFLQRENVPRTDPFLVEEVNGYYKATVVLPLPDLYGIRGGVGIAMNATDARVLAAMHAIDVLNILGFHLMDGSTARAEWIAARRARGESVPADTRDPNVLSPSGRRRVATGNSSTQTPSSSTNARSVAAAPDVGTSDPTAPQNTKRRVAKRARVADAQPTEEKDAANSDSDEATSYLKMRETVSKELWNLEPDSPDGYIMVSPTDPETRTQFEQALYSPRQVDLGSKSRIKNYLASVGRRIEEVFFVQRIEAEDNGGQAICRCAVNLPVPRRFGDRIALGEAVDPKDAENLAAMHAELILDTLGIPIYTDSALQRLHVRLCAKCGRNAPVEYSESVAAATASPPPLRREVVGSIHWENKSKRRRAAISVQKGGGPANSQETTSALREDEEPLIAPKERREYTFVPEKDLDLVSRARVHYYLRRNGIAKLEPEYRMELRGLGNVLHIAELTLPLPDVYGKRVAHGSALTKRDAEILCWMHAEQILDAVGLCLFDNLPMLQRRHVECVKRLGRWAPLVSENATKPPHTPTPLPLTLGTTQEKPQYPTPPTNVRQDWEQYAQECQRYIEINVMREHNIFYEMGKTPRTGDETYDAALAEVESMPIDPDAKTVLQRYCNVANVNYPTFWKSRTVGPISCRVCLTTIEVPGHEYLRASGVAWNKEASQRQAAMHALALLRRVEPDFAEFEKQIKAEVVDKVNLVDPAAVLDEEAPVLRRTARVSKKSLGNWDPVSKDFSHEGKVRIIELFTVCFGLQPPLVRHLNRRSGSFVQHFTVVEVTDEDGKTWVGTGRDAGPRFNEPAAFDDLFSKLSRGVQGFQALMDLIRAHPHLDPEHIANVSLTDSQKERILKAVDGLPMVEEEDVAHPEQWADADSDRGIGIMALIAMDASQRAQESQELEAKLQAKLTNEEYQTRYASQRQRLRIYEKRDEILRAISSNQIVIICGTTGCGKTTQVPQYILDDMTEKGMGGDCSIVITQPRRLSAVSIARRVAAERLESIGETCGYSIRLDAKPGRNINFCTSGVLLRLLHSAPLLNGINYLIIDEIHERDINSDFLLILLRQLLHRRKDLHVILMSATLQADQFGKYFGNAPIINVEGYVHAVEEMYLEDLVPIATERNVMTPLLKEAAAALERNGAADGFCPTVVPPTAKYGFLEATADIDYMTIQIAIDHAVRSLDLTDSSILVFLPGWDEINRAKEILERNAKFHIICLHSSVGAEEQMRCFLPAPEGKIKLILSTNIAESGVTIDDVAAVIDVGRGKEKSYVMRKGTTSVGRNEMGSMSQLVTVYASRANCVQRRGRVGRTRPGMCIRLYSKKHFQSLHDFQTPEMLRTHLDSLCLQILALDLGDPADFLQQALEPPSSDHIEAAMKRLHELGATTSTRQLTPLGLRLSRLPVAPKVGKMVIMGAILRCLDSALTIAGVSDTDVFISTREHREAVRLHKEDLSYGTQSDVIASVNAFNFWVTSHYAKTPAEVVYDLQERMLSVPQLLTVSKYKQQFFEIVAGSGFIHMKQNYKDAKNKDRADIFVDQSEYSADSLNVGLVKCVVASGLFPNVVMNRGKRLMRNKLANRLDPSSASVVHRTSQENIGQPYFVYDELVKSSESERLLVRDLTNVSLWTILLMGTSSMPVTYRDDLNLAVVDEWIMFRATFGTLELIRKFKRALNVCLGRKFMNPNDEENNAKLEELRCIIKELVCTPFKPNDLAEKPWEEKGVIIEPCTEPKGGSSEAEKTHVNSSHTPTTSAEAGGDS.

A mitochondrion-targeting transit peptide spans 1 to 30; the sequence is MRAIRLTVACRYLGPFRSVTLSPVVLPVRL. Disordered stretches follow at residues 503–593 and 937–969; these read RARG…DEAT and ENAT…PTNV. Positions 532 to 541 are enriched in low complexity; it reads SSTQTPSSST. The region spanning 1024–1095 is the DRBM domain; the sequence is DAKTVLQRYC…AMHALALLRR (72 aa). Positions 1348 to 1513 constitute a Helicase ATP-binding domain; the sequence is LRAISSNQIV…FGNAPIINVE (166 aa). 1361–1368 is an ATP binding site; sequence GTTGCGKT. An Important for binding to gRNA motif is present at residues 1366–1367; sequence GK. The DEAH box motif lies at 1460 to 1463; sequence DEIH. A Helicase C-terminal domain is found at 1585–1762; it reads AIDHAVRSLD…SLCLQILALD (178 aa). The interval 2132-2167 is disordered; sequence IIEPCTEPKGGSSEAEKTHVNSSHTPTTSAEAGGDS. Residues 2151 to 2161 are compositionally biased toward polar residues; the sequence is VNSSHTPTTSA.

It belongs to the DEAD box helicase family. DEAH subfamily. Component of the REH2-associated complex (REH2C) composed of helicase REH2, associated factors H2F1 and H2F2, and mRNAs at various editing stages; the formation of the complex is RNA-independent. Within the complex, interacts with H2F1; the interaction is direct. Interacts transiently, in a RNA-dependent manner, with various editing complexes including the RNA editing core (RECC) complex, the gRNA-binding (GRBC) complex (also known as the MRB1 complex) and the RNA editing mediator (REMC) complex. Interacts with GAP1/GRBC2 via RNA forming a variant of the GRBC complex known as REH2-GRBC complex. Interacts with mitochondrial ribosomes.

The protein localises to the mitochondrion. It carries out the reaction ATP + H2O = ADP + phosphate + H(+). ATP-dependent RNA helicase that unwinds RNA in a 3' to 5' direction and that plays an important role in mitochondrial mRNA editing, a process involving the addition and deletion of uridine (U) nucleotides in the pre-mRNA. As part of the RET2-containing gRNA-binding (RET2-GRBC) complex, acts as a scaffold for the assembly of mRNA-gRNA hybrids and the recruitment of the RNA editing core (RECC) complex. Regulates several steps of mRNA editing by the MRBC3010/GRBC6 containing gRNA-binding (MRBC3010-GRBC) complex including loading of unedited mRNA, editing in the first sequence block and subsequent editing progression across multiple sequence blocks. Also, regulates the RNA substrate content of the MRBC3010-GRBC complex as well as the association of this complex with mitoribosomes. The protein is RNA editing associated helicase 2 of Trypanosoma brucei brucei (strain 927/4 GUTat10.1).